The sequence spans 291 residues: ATP synthase gamma chain (291 aa).

Belongs to the ATPase gamma chain family. In terms of assembly, F-type ATPases have 2 components, CF(1) - the catalytic core - and CF(0) - the membrane proton channel. CF(1) has five subunits: alpha(3), beta(3), gamma(1), delta(1), epsilon(1). CF(0) has three main subunits: a, b and c.

The protein resides in the cell inner membrane. Its function is as follows. Produces ATP from ADP in the presence of a proton gradient across the membrane. The gamma chain is believed to be important in regulating ATPase activity and the flow of protons through the CF(0) complex. This Sphingopyxis alaskensis (strain DSM 13593 / LMG 18877 / RB2256) (Sphingomonas alaskensis) protein is ATP synthase gamma chain.